Consider the following 1143-residue polypeptide: MTTSPIRVRIRTRIQISFIFLLTHLSQSSSSDQSSLKTDSLSLLSFKTMIQDDPNNILSNWSPRKSPCQFSGVTCLGGRVTEINLSGSGLSGIVSFNAFTSLDSLSVLKLSENFFVLNSTSLLLLPLTLTHLELSSSGLIGTLPENFFSKYSNLISITLSYNNFTGKLPNDLFLSSKKLQTLDLSYNNITGPISGLTIPLSSCVSMTYLDFSGNSISGYISDSLINCTNLKSLNLSYNNFDGQIPKSFGELKLLQSLDLSHNRLTGWIPPEIGDTCRSLQNLRLSYNNFTGVIPESLSSCSWLQSLDLSNNNISGPFPNTILRSFGSLQILLLSNNLISGDFPTSISACKSLRIADFSSNRFSGVIPPDLCPGAASLEELRLPDNLVTGEIPPAISQCSELRTIDLSLNYLNGTIPPEIGNLQKLEQFIAWYNNIAGEIPPEIGKLQNLKDLILNNNQLTGEIPPEFFNCSNIEWVSFTSNRLTGEVPKDFGILSRLAVLQLGNNNFTGEIPPELGKCTTLVWLDLNTNHLTGEIPPRLGRQPGSKALSGLLSGNTMAFVRNVGNSCKGVGGLVEFSGIRPERLLQIPSLKSCDFTRMYSGPILSLFTRYQTIEYLDLSYNQLRGKIPDEIGEMIALQVLELSHNQLSGEIPFTIGQLKNLGVFDASDNRLQGQIPESFSNLSFLVQIDLSNNELTGPIPQRGQLSTLPATQYANNPGLCGVPLPECKNGNNQLPAGTEEGKRAKHGTRAASWANSIVLGVLISAASVCILIVWAIAVRARRRDADDAKMLHSLQAVNSATTWKIEKEKEPLSINVATFQRQLRKLKFSQLIEATNGFSAASMIGHGGFGEVFKATLKDGSSVAIKKLIRLSCQGDREFMAEMETLGKIKHRNLVPLLGYCKIGEERLLVYEFMQYGSLEEVLHGPRTGEKRRILGWEERKKIAKGAAKGLCFLHHNCIPHIIHRDMKSSNVLLDQDMEARVSDFGMARLISALDTHLSVSTLAGTPGYVPPEYYQSFRCTAKGDVYSIGVVMLEILSGKRPTDKEEFGDTNLVGWSKMKAREGKHMEVIDEDLLKEGSSESLNEKEGFEGGVIVKEMLRYLEIALRCVDDFPSKRPNMLQVVASLRELRGSENNSHSHSNSL.

The signal sequence occupies residues 1-31; the sequence is MTTSPIRVRIRTRIQISFIFLLTHLSQSSSS. Topologically, residues 32–756 are extracellular; sequence DQSSLKTDSL…GTRAASWANS (725 aa). The Cys pair 1 signature appears at 68–75; that stretch reads CQFSGVTC. LRR repeat units lie at residues 77 to 101, 102 to 125, 126 to 150, 151 to 175, 177 to 200, 203 to 227, 228 to 250, 251 to 275, 277 to 299, 300 to 324, 326 to 349, 351 to 373, 374 to 398, 399 to 422, 424 to 446, 447 to 470, 472 to 493, 494 to 518, 520 to 542, 570 to 594, 610 to 634, 635 to 660, 662 to 681, and 682 to 707; these read GGRV…AFTS, LDSL…LLLL, PLTL…FFSK, YSNL…LFLS, KKLQ…TIPL, CVSM…LINC, TNLK…SFGE, LKLL…IGDT, RSLQ…SLSS, CSWL…ILRS, GSLQ…ISAC, SLRI…LCPG, AASL…ISQC, SELR…IGNL, KLEQ…IGKL, QNLK…FFNC, NIEW…DFGI, LSRL…LGKC, TLVW…LGRQ, VGGL…KSCD, YQTI…IGEM, IALQ…QLKN, GVFD…SFSN, and LSFL…QLST. N-linked (GlcNAc...) asparagine glycosylation is found at Asn84 and Asn118. Residues Asn163, Asn188, Asn226, and Asn234 are each glycosylated (N-linked (GlcNAc...) asparagine). N-linked (GlcNAc...) asparagine glycans are attached at residues Asn288 and Asn312. An N-linked (GlcNAc...) asparagine glycan is attached at Asn412. The N-linked (GlcNAc...) asparagine glycan is linked to Asn469. N-linked (GlcNAc...) asparagine glycosylation is present at Asn506. An N-linked (GlcNAc...) asparagine glycan is attached at Asn681. The Cys pair 2 signature appears at 720–727; it reads CGVPLPEC. Residues 757 to 777 form a helical membrane-spanning segment; that stretch reads IVLGVLISAASVCILIVWAIA. The Cytoplasmic segment spans residues 778–1143; that stretch reads VRARRRDADD…NNSHSHSNSL (366 aa). Thr835 bears the Phosphothreonine mark. Residues 838-1129 form the Protein kinase domain; that stretch reads FSAASMIGHG…LQVVASLREL (292 aa). Residues 844 to 852 and Lys866 each bind ATP; that span reads IGHGGFGEV. Tyr911 is modified (phosphotyrosine). Catalysis depends on Asp966, which acts as the Proton acceptor. Ser1001 bears the Phosphoserine mark. Residue Tyr1009 is modified to Phosphotyrosine.

The protein belongs to the protein kinase superfamily. Ser/Thr protein kinase family. Interacts with TTL3. In terms of tissue distribution, expressed in provascular and procambial sites throughout plant development. Expressed throughout globe- to heart-staged embryos. Then, it is restricted to procambial cells by the late torpedo stage, and this pattern persists throughout the duration of embryo development. After germination, it is expressed not only in procambial cells throughout the plant but also in all lateral organ primordia before the onset of vascularization.

The protein localises to the cell membrane. It carries out the reaction L-seryl-[protein] + ATP = O-phospho-L-seryl-[protein] + ADP + H(+). The catalysed reaction is L-threonyl-[protein] + ATP = O-phospho-L-threonyl-[protein] + ADP + H(+). In terms of biological role, receptor with a serine/threonine-protein kinase activity, which may transduce extracellular spatial and temporal signals into downstream cell differentiation responses in provascular and procambial cells. In contrast to BRI1, BRL1 and BRL3, it does not bind brassinolide. This is Serine/threonine-protein kinase BRI1-like 2 from Arabidopsis thaliana (Mouse-ear cress).